The chain runs to 196 residues: RNA-binding protein with multiple splicing 2 (196 aa).

The RRM domain maps to 20–97; the sequence is RTLFVSGLPI…QTLRLEFAKA (78 aa). Residues 30–40 are important for homodimerization; the sequence is DIKPRELYLLF.

As to quaternary structure, homodimer. In terms of tissue distribution, expressed in developing heart, pronephros, retina and epiphysis. In adult, high expression in heart, moderate in kidney, undetectable in liver, lung and skeletal muscle.

The protein localises to the cytoplasm. It localises to the nucleus. It is found in the stress granule. In terms of biological role, RNA-binding protein involved in the regulation of smooth muscle cell differentiation and proliferation in the gastrointestinal system. Binds NOG mRNA, the major inhibitor of the bone morphogenetic protein (BMP) pathway. Mediates an increase of NOG mRNA levels, thereby contributing to the negative regulation of BMP signaling pathway and promoting reversible dedifferentiation and proliferation of smooth muscle cells. Acts as a pre-mRNA alternative splicing regulator. Mediates ACTN1 and FLNB alternative splicing. Likely binds to mRNA tandem CAC trinucleotide or CA dinucleotide motifs. The sequence is that of RNA-binding protein with multiple splicing 2 from Xenopus laevis (African clawed frog).